The primary structure comprises 317 residues: NAC domain-containing protein 55 (317 aa).

The NAC domain occupies 14–162 (LPPGFRFYPT…DWVLCRIYKK (149 aa)). The DNA-binding element occupies 111 to 168 (VGIKKALVFYIGKAPKGTKTNWIMHEYRLIEPSRRNGSTKLDDWVLCRIYKKQTSAQK).

In terms of tissue distribution, expressed in leaves.

It localises to the nucleus. In terms of biological role, transcription factors that bind specifically to the 5'-CATGTG-3' motif. This chain is NAC domain-containing protein 55 (NAC055), found in Arabidopsis thaliana (Mouse-ear cress).